A 311-amino-acid chain; its full sequence is tRNA N6-adenosine threonylcarbamoyltransferase (311 aa).

Residues histidine 108 and histidine 112 each contribute to the Fe cation site. Substrate is bound by residues leucine 130–glycine 134, aspartate 163, glycine 176, aspartate 180, and asparagine 270. Aspartate 294 contributes to the Fe cation binding site.

This sequence belongs to the KAE1 / TsaD family. The cofactor is Fe(2+).

The protein resides in the cytoplasm. The enzyme catalyses L-threonylcarbamoyladenylate + adenosine(37) in tRNA = N(6)-L-threonylcarbamoyladenosine(37) in tRNA + AMP + H(+). Its function is as follows. Required for the formation of a threonylcarbamoyl group on adenosine at position 37 (t(6)A37) in tRNAs that read codons beginning with adenine. Is involved in the transfer of the threonylcarbamoyl moiety of threonylcarbamoyl-AMP (TC-AMP) to the N6 group of A37, together with TsaE and TsaB. TsaD likely plays a direct catalytic role in this reaction. This chain is tRNA N6-adenosine threonylcarbamoyltransferase, found in Metamycoplasma arthritidis (strain 158L3-1) (Mycoplasma arthritidis).